The sequence spans 246 residues: ATP synthase subunit a, chloroplastic (246 aa).

5 consecutive transmembrane segments (helical) span residues 33-53 (VHGQ…GFGL), 99-119 (TIFL…WALI), 133-153 (INTT…AGIN), 201-221 (GVLV…LGLF), and 222-242 (TSAI…GESL).

The protein belongs to the ATPase A chain family. F-type ATPases have 2 components, CF(1) - the catalytic core - and CF(0) - the membrane proton channel. CF(1) has five subunits: alpha(3), beta(3), gamma(1), delta(1), epsilon(1). CF(0) has four main subunits: a, b, b' and c.

Its subcellular location is the plastid. It localises to the chloroplast thylakoid membrane. Key component of the proton channel; it plays a direct role in the translocation of protons across the membrane. The polypeptide is ATP synthase subunit a, chloroplastic (Oltmannsiellopsis viridis (Marine flagellate)).